The following is a 470-amino-acid chain: MNPNQKIITIGSASLGLVILNVILHVVSIIVTVLVLSNNGTGPNCNGTIIREYNETVRVERITQWYNTNIIEYIEEPSNEYYMSNTEPLCEAQGFAPFSKDNGIRIGSRGHVFVIREPFVSCSPLECRTFFLTQGSLLNDKHSNGTVKDRSPYRTLMSVEVGQSPNVYQARFEAVAWSATACHDGKKWMTVGVTGPDAQAVAVVHYGGVPVDVINSWAGDILRTQESSCTCIKGDCYWVMTDGPANRQAQYRIFKAKDGRIIGQTDINFNGGHIEECSCYPNEGKVECVCRDNWTGTNRPVLVISPDLSYTVGYLCAGIPTDTPRGEDSQFTGSCTSPLGSQGYGVKGFGFRQGNDVWAGRTISRTSRSGFEIIKIRNGWTQNSKDQIRKQVIVDNLNWSGYSGSFTLPVELTKKGCLVPCFWVEMIRGKPEEITIWTSSSSIVMCGVDHKVASWSWHDGAILPFDIDKM.

Over 1 to 14 (MNPNQKIITIGSAS) the chain is Intravirion. Positions 11–32 (GSASLGLVILNVILHVVSIIVT) are involved in apical transport and lipid raft association. The chain crosses the membrane as a helical span at residues 15–35 (LGLVILNVILHVVSIIVTVLV). The segment at 32 to 86 (TVLVLSNNGTGPNCNGTIIREYNETVRVERITQWYNTNIIEYIEEPSNEYYMSNT) is hypervariable stalk region. Residues 36-470 (LSNNGTGPNC…AILPFDIDKM (435 aa)) are Virion surface-facing. N-linked (GlcNAc...) asparagine; by host glycosylation is found at N39, N46, and N54. The interval 89–470 (LCEAQGFAPF…AILPFDIDKM (382 aa)) is head of neuraminidase. 8 disulfides stabilise this stretch: C90–C417, C122–C127, C182–C229, C231–C236, C277–C290, C279–C288, C316–C335, and C421–C446. R116 serves as a coordination point for substrate. The N-linked (GlcNAc...) asparagine; by host glycan is linked to N144. D149 functions as the Proton donor/acceptor in the catalytic mechanism. Residue R150 coordinates substrate. 275 to 276 (EE) contacts substrate. Residue R291 participates in substrate binding. D292 lines the Ca(2+) pocket. The N-linked (GlcNAc...) asparagine; by host glycan is linked to N293. Residues G296 and D322 each contribute to the Ca(2+) site. R368 lines the substrate pocket. N-linked (GlcNAc...) asparagine; by host glycosylation is present at N398. The active-site Nucleophile is the Y402.

Belongs to the glycosyl hydrolase 34 family. In terms of assembly, homotetramer. Ca(2+) is required as a cofactor. Post-translationally, N-glycosylated.

Its subcellular location is the virion membrane. The protein resides in the host apical cell membrane. The enzyme catalyses Hydrolysis of alpha-(2-&gt;3)-, alpha-(2-&gt;6)-, alpha-(2-&gt;8)- glycosidic linkages of terminal sialic acid residues in oligosaccharides, glycoproteins, glycolipids, colominic acid and synthetic substrates.. Inhibited by the neuraminidase inhibitors zanamivir (Relenza) and oseltamivir (Tamiflu). These drugs interfere with the release of progeny virus from infected cells and are effective against all influenza strains. Resistance to neuraminidase inhibitors is quite rare. Its function is as follows. Catalyzes the removal of terminal sialic acid residues from viral and cellular glycoconjugates. Cleaves off the terminal sialic acids on the glycosylated HA during virus budding to facilitate virus release. Additionally helps virus spread through the circulation by further removing sialic acids from the cell surface. These cleavages prevent self-aggregation and ensure the efficient spread of the progeny virus from cell to cell. Otherwise, infection would be limited to one round of replication. Described as a receptor-destroying enzyme because it cleaves a terminal sialic acid from the cellular receptors. May facilitate viral invasion of the upper airways by cleaving the sialic acid moieties on the mucin of the airway epithelial cells. Likely to plays a role in the budding process through its association with lipid rafts during intracellular transport. May additionally display a raft-association independent effect on budding. Plays a role in the determination of host range restriction on replication and virulence. Sialidase activity in late endosome/lysosome traffic seems to enhance virus replication. The protein is Neuraminidase of Influenza A virus (strain A/Equine/Miami/1/1963 H3N8).